A 421-amino-acid polypeptide reads, in one-letter code: CinA-like protein (421 aa).

This sequence belongs to the CinA family.

This is CinA-like protein from Mycobacterium sp. (strain JLS).